Consider the following 67-residue polypeptide: Large ribosomal subunit protein bL35 (67 aa).

The tract at residues 22-52 is disordered; sequence VLAGPGKKRHNLSARSQKAKRQNRGSQVLTH. Residues 27–44 show a composition bias toward basic residues; it reads GKKRHNLSARSQKAKRQN.

The protein belongs to the bacterial ribosomal protein bL35 family.

This is Large ribosomal subunit protein bL35 from Granulibacter bethesdensis (strain ATCC BAA-1260 / CGDNIH1).